The sequence spans 187 residues: Pseudo histidine-containing phosphotransfer protein 1 (187 aa).

The HPt domain occupies 74–169 (SPNFVEEVVT…AVLRQKLESY (96 aa)).

Functionally, functions as a two-component phosphorelay mediator between cytokinin sensor histidine kinases and response regulators (B-type ARRs). Plays an important role in propagating cytokinin signal transduction. The polypeptide is Pseudo histidine-containing phosphotransfer protein 1 (Oryza sativa subsp. japonica (Rice)).